Consider the following 447-residue polypeptide: Probable glycosyltransferase 7 (447 aa).

A disordered region spans residues 1–31 (MRATTGARHLHPPWRRGLRHHRQSTMPPRAS). At 1 to 37 (MRATTGARHLHPPWRRGLRHHRQSTMPPRASRGRLAD) the chain is on the cytoplasmic side. The segment covering 8–23 (RHLHPPWRRGLRHHRQ) has biased composition (basic residues). A helical; Signal-anchor for type II membrane protein membrane pass occupies residues 38-60 (AALFTAGAVLGSVLLLTLASPFS). The Lumenal segment spans residues 61–447 (SSSSPSSGVG…LPFDHPTQTA (387 aa)). Residues Asn-285 and Asn-329 are each glycosylated (N-linked (GlcNAc...) asparagine).

The protein belongs to the glycosyltransferase 34 family.

It is found in the golgi apparatus membrane. Its function is as follows. Probable glycosyltransferase that may be involved in the biosynthesis of xyloglucan. This chain is Probable glycosyltransferase 7, found in Oryza sativa subsp. indica (Rice).